The chain runs to 354 residues: Uroporphyrinogen decarboxylase (354 aa).

Substrate is bound by residues Arg27 to Arg31, Asp77, Tyr154, Ser209, and His327.

Belongs to the uroporphyrinogen decarboxylase family. As to quaternary structure, homodimer.

It localises to the cytoplasm. It carries out the reaction uroporphyrinogen III + 4 H(+) = coproporphyrinogen III + 4 CO2. It participates in porphyrin-containing compound metabolism; protoporphyrin-IX biosynthesis; coproporphyrinogen-III from 5-aminolevulinate: step 4/4. In terms of biological role, catalyzes the decarboxylation of four acetate groups of uroporphyrinogen-III to yield coproporphyrinogen-III. This Methylobacillus flagellatus (strain ATCC 51484 / DSM 6875 / VKM B-1610 / KT) protein is Uroporphyrinogen decarboxylase.